Consider the following 2364-residue polypeptide: Cytotoxin-L (2364 aa).

Positions 1 to 91 are four-helical bundle; the sequence is MNLVNKAQLQ…EVLELKNNSL (91 aa). Residues 96–468 enclose the GT44 domain; sequence KNLHFIWIGG…APDVRSTINL (373 aa). A glucosyltransferase region region spans residues 96–468; that stretch reads KNLHFIWIGG…APDVRSTINL (373 aa). Residues 101-103, asparagine 139, 265-270, and 286-288 contribute to the UDP-alpha-D-glucose site; these read IWI, LAAASD, and DVD. Aspartate 288, glutamate 515, and serine 518 together coordinate Mg(2+). Residue 518–520 coordinates UDP-alpha-D-glucose; the sequence is SLW. An autoprocessing region region spans residues 544–799; that stretch reads GEDDNLDFAQ…KSKYLHELST (256 aa). The Zn(2+) site is built by glutamate 545 and aspartate 546. Positions 567–774 constitute a Peptidase C80 domain; that stretch reads LSSMKTRNKE…EESIIKDISS (208 aa). 3 residues coordinate 1D-myo-inositol hexakisphosphate: tyrosine 577, lysine 600, and lysine 647. Histidine 653 lines the Zn(2+) pocket. The For protease activity role is filled by histidine 653. Cysteine 698 serves as the catalytic Nucleophile; for protease activity. Histidine 757 lines the Zn(2+) pocket. Residues lysine 764, lysine 775, and lysine 792 each contribute to the 1D-myo-inositol hexakisphosphate site. The tract at residues 800-1500 is translocation region; sequence LLQEIRNNAN…ESIIRNIYMP (701 aa). 5 interaction with host SEMA6A and SEMA6B regions span residues 1433–1438, 1466–1471, 1484–1495, 1504–1511, and 1596–1601; these read CMKLIE, DNETKY, FTAEFSNESIIR, NLFIYSSK, and YNNLDP. Cell wall-binding repeat units lie at residues 1813 to 1832, 1833 to 1852, 1854 to 1873, 1876 to 1895, 1926 to 1945, 1946 to 1965, 1967 to 1986, 1987 to 2006, 2007 to 2026, 2057 to 2076, 2077 to 2097, 2099 to 2118, 2119 to 2138, 2139 to 2158, 2209 to 2224, 2227 to 2249, 2250 to 2269, 2270 to 2289, 2320 to 2339, and 2340 to 2359; these read EFGL…FGNM, VSGL…PKNN, ITGF…TKSG, SIGE…QGIL, FIGK…NYRA, AVEW…KTGE, LKGL…NGIM, QTGF…DGVM, QVGY…NGER, YNGI…SNTA, VVGW…NTAE, CIGL…NGIR, QLGF…SGKI, ELGY…SGLV, ETGW…YFDP, KKAY…NGIM, RTGL…DGKM, QFGY…DGKM, YTGW…EYIA, and ATGS…DTAE. The receptor-binding (CROPS) region stretch occupies residues 1835-2364; that stretch reads GLIYINDSLY…PDTAELVVSE (530 aa).

It belongs to the clostridial glucosylating toxin (LCGT) family. Homomultimer; forms an inactive homomultimer at pH 8, which dissociates at pH 4, leading to cytotoxicity. Interacts with host SEMA6A; interaction promotes toxin entry into host cell. Interacts with host SEMA6B; interaction promotes toxin entry into host cell. Requires Zn(2+) as cofactor. Mn(2+) is required as a cofactor. Mg(2+) serves as cofactor. Undergoes autocatalytic cleavage to release the N-terminal part (Glucosyltransferase TcsL), which constitutes the active part of the toxin, in the host cytosol. 1D-myo-inositol hexakisphosphate-binding (InsP6) activates the peptidase C80 domain and promotes autoprocessing.

It localises to the secreted. The protein localises to the host endosome membrane. The protein resides in the host cytoplasm. It is found in the host cytosol. Its subcellular location is the host cell membrane. The enzyme catalyses L-threonyl-[protein] + UDP-alpha-D-glucose = 3-O-(alpha-D-glucosyl)-L-threonyl-[protein] + UDP + H(+). Its activity is regulated as follows. Protease activity is activated upon binding to 1D-myo-inositol hexakisphosphate (InsP6), which induces conformational reorganization. In terms of biological role, precursor of a cytotoxin that targets the vascular endothelium, inducing an anti-inflammatory effect and resulting in lethal toxic shock syndrome. TcsL constitutes the main toxin that mediates the pathology of P.sordellii infection, an anaerobic Gram-positive bacterium found in soil and in the gastrointestinal and vaginal tracts of animals and humans; although the majority of carriers are asymptomatic, pathogenic P.sordellii infections arise rapidly and are highly lethal. This form constitutes the precursor of the toxin: it enters into host cells and mediates autoprocessing to release the active toxin (Glucosyltransferase TcsL) into the host cytosol. Targets vascular endothelium by binding to the semaphorin proteins SEMA6A and SEMA6B, and enters host cells via clathrin-mediated endocytosis. Once entered into host cells, acidification in the endosome promotes the membrane insertion of the translocation region and formation of a pore, leading to translocation of the GT44 and peptidase C80 domains across the endosomal membrane. This activates the peptidase C80 domain and autocatalytic processing, releasing the N-terminal part (Glucosyltransferase TcsL), which constitutes the active part of the toxin, in the cytosol. Active form of the toxin, which is released into the host cytosol following autoprocessing and inactivates small GTPases. Acts by mediating monoglucosylation of small GTPases of the Ras (H-Ras/HRAS, K-Ras/KRAS and N-Ras/NRAS) family in host cells at the conserved threonine residue located in the switch I region ('Thr-37/35'), using UDP-alpha-D-glucose as the sugar donor. Also able to catalyze monoglucosylation of some members of the Rho family (Rac1 and Rap2A), but with less efficiency than with Ras proteins. Monoglucosylation of host small GTPases completely prevents the recognition of the downstream effector, blocking the GTPases in their inactive form and leading to apoptosis. Induces an anti-inflammatory effect, mainly by inactivating Ras proteins which results in blockage of the cell cycle and killing of immune cells. The absence or moderate local inflammatory response allows C.sordellii spreading in deep tissues, production of toxin which is released in the general circulation and causes a toxic shock syndrome. This chain is Cytotoxin-L, found in Paraclostridium sordellii (strain ATCC 9714 / DSM 2141 / JCM 3814 / LMG 15708 / NCIMB 10717 / 211) (Clostridium sordellii).